The primary structure comprises 288 residues: tRNA pseudouridine synthase A (288 aa).

Aspartate 58 (nucleophile) is an active-site residue. Substrate is bound at residue tyrosine 124.

Belongs to the tRNA pseudouridine synthase TruA family. As to quaternary structure, homodimer.

It carries out the reaction uridine(38/39/40) in tRNA = pseudouridine(38/39/40) in tRNA. In terms of biological role, formation of pseudouridine at positions 38, 39 and 40 in the anticodon stem and loop of transfer RNAs. The chain is tRNA pseudouridine synthase A from Corynebacterium diphtheriae (strain ATCC 700971 / NCTC 13129 / Biotype gravis).